Reading from the N-terminus, the 331-residue chain is Biotin synthase (331 aa).

In terms of domain architecture, Radical SAM core spans 52 to 277; it reads PDVEVEGIIS…RTMLRFAGGR (226 aa). Residues Cys67, Cys71, and Cys74 each coordinate [4Fe-4S] cluster. [2Fe-2S] cluster contacts are provided by Cys110, Cys143, Cys202, and Arg272.

The protein belongs to the radical SAM superfamily. Biotin synthase family. In terms of assembly, homodimer. [4Fe-4S] cluster serves as cofactor. Requires [2Fe-2S] cluster as cofactor.

It catalyses the reaction (4R,5S)-dethiobiotin + (sulfur carrier)-SH + 2 reduced [2Fe-2S]-[ferredoxin] + 2 S-adenosyl-L-methionine = (sulfur carrier)-H + biotin + 2 5'-deoxyadenosine + 2 L-methionine + 2 oxidized [2Fe-2S]-[ferredoxin]. Its pathway is cofactor biosynthesis; biotin biosynthesis; biotin from 7,8-diaminononanoate: step 2/2. In terms of biological role, catalyzes the conversion of dethiobiotin (DTB) to biotin by the insertion of a sulfur atom into dethiobiotin via a radical-based mechanism. The polypeptide is Biotin synthase (Mycolicibacterium gilvum (strain PYR-GCK) (Mycobacterium gilvum (strain PYR-GCK))).